Consider the following 967-residue polypeptide: Vitamin B12-dependent ribonucleotide reductase (967 aa).

The tract at residues 1–23 (MTETASGPARSSRAKGTKAGKGL) is disordered. Substrate contacts are provided by residues S143, 159-160 (AC), G188, 364-368 (NPCSE), and 554-558 (PTGTI). Residues C160 and C377 are joined by a disulfide bond. Catalysis depends on N364, which acts as the Proton acceptor. C366 acts as the Cysteine radical intermediate in catalysis. E368 functions as the Proton acceptor in the catalytic mechanism.

The protein belongs to the ribonucleoside diphosphate reductase class-2 family. It depends on adenosylcob(III)alamin as a cofactor.

The enzyme catalyses a 2'-deoxyribonucleoside 5'-diphosphate + [thioredoxin]-disulfide + H2O = a ribonucleoside 5'-diphosphate + [thioredoxin]-dithiol. Its function is as follows. Catalyzes the reduction of ribonucleotides to deoxyribonucleotides. May function to provide a pool of deoxyribonucleotide precursors for DNA repair during oxygen limitation and/or for immediate growth after restoration of oxygen. This is Vitamin B12-dependent ribonucleotide reductase (nrdJ) from Streptomyces coelicolor (strain ATCC BAA-471 / A3(2) / M145).